The sequence spans 262 residues: MSDAEEQEYEEEQPEEEEAAEEEEAPEEPEPVAEREEERPKPSRPVVPPLIPPKIPEGERVDFDDIHRKRMEKDLLELQTLIDVHFEQRKKEEEELVALKERIERRRAERAEQQRFRTEKERERQAKLAEEKMRKEEEEAKKRAEDDAKKKKVLSNMGAHFGGYLVKAEQKRGKRQTGREMKQRILSERKKPLNIDHMGEDQLREKAQELSDWIHQLESEKFDLMAKLKQQKYEINVLYNRISHAQKFRKGAGKGRVGGRWK.

The span at 1–31 (MSDAEEQEYEEEQPEEEEAAEEEEAPEEPEP) shows a compositional bias: acidic residues. 3 disordered regions span residues 1–59 (MSDA…PEGE), 107–153 (RAER…KKKV), and 165–197 (LVKA…NIDH). Ser2 bears the Phosphoserine; by CK2 mark. Positions 32 to 41 (VAEREEERPK) are enriched in basic and acidic residues. The span at 43–55 (SRPVVPPLIPPKI) shows a compositional bias: pro residues. Basic and acidic residues-rich tracts occupy residues 107–149 (RAER…DDAK) and 177–197 (TGRE…NIDH).

Belongs to the troponin T family. In terms of assembly, interacts with TPM3.

Functionally, troponin T is the tropomyosin-binding subunit of troponin, the thin filament regulatory complex which confers calcium-sensitivity to striated muscle actomyosin ATPase activity. The sequence is that of Troponin T, slow skeletal muscle (TNNT1) from Sus scrofa (Pig).